A 121-amino-acid chain; its full sequence is Nitrogenase-stabilizing/protective protein NifW (121 aa).

This sequence belongs to the NifW family. In terms of assembly, homotrimer; associates with NifD.

In terms of biological role, may protect the nitrogenase Fe-Mo protein from oxidative damage. This chain is Nitrogenase-stabilizing/protective protein NifW, found in Methylacidiphilum infernorum (isolate V4) (Methylokorus infernorum (strain V4)).